We begin with the raw amino-acid sequence, 608 residues long: Aspartate--tRNA(Asp/Asn) ligase (608 aa).

Glutamate 179 serves as a coordination point for L-aspartate. Residues 203 to 206 (QLFK) form an aspartate region. Arginine 225 serves as a coordination point for L-aspartate. ATP contacts are provided by residues 225 to 227 (RDE) and glutamine 234. Residue histidine 461 coordinates L-aspartate. Residue glutamate 494 coordinates ATP. Arginine 501 is an L-aspartate binding site. Position 546 to 549 (546 to 549 (GLDR)) interacts with ATP.

Belongs to the class-II aminoacyl-tRNA synthetase family. Type 1 subfamily. Homodimer.

It is found in the cytoplasm. The enzyme catalyses tRNA(Asx) + L-aspartate + ATP = L-aspartyl-tRNA(Asx) + AMP + diphosphate. Functionally, aspartyl-tRNA synthetase with relaxed tRNA specificity since it is able to aspartylate not only its cognate tRNA(Asp) but also tRNA(Asn). Reaction proceeds in two steps: L-aspartate is first activated by ATP to form Asp-AMP and then transferred to the acceptor end of tRNA(Asp/Asn). In Psychrobacter arcticus (strain DSM 17307 / VKM B-2377 / 273-4), this protein is Aspartate--tRNA(Asp/Asn) ligase.